We begin with the raw amino-acid sequence, 778 residues long: Actin-binding LIM protein 1 (778 aa).

4 consecutive LIM zinc-binding domains span residues 97–156 (IHCH…MYGT), 156–216 (TRCH…MSSS), 224–283 (SNCA…LFGV), and 283–343 (VKCE…TKTE). The residue at position 216 (Ser-216) is a Phosphoserine. The disordered stretch occupies residues 339–370 (STKTEEKLRPTRTSSESIYSRPGSSIPGSPGH). Low complexity predominate over residues 360 to 369 (PGSSIPGSPG). A Phosphoserine modification is found at Ser-367. Phosphotyrosine occurs at positions 373 and 396. 2 disordered regions span residues 414–510 (YDDK…QAPK) and 552–597 (AAQA…EELL). Phosphoserine is present on residues Ser-422, Ser-426, and Ser-431. Positions 423-434 (LGESPRTLSPTP) are enriched in polar residues. Position 433 is a phosphothreonine (Thr-433). Ser-435 carries the post-translational modification Phosphoserine. At Tyr-439 the chain carries Phosphotyrosine. The span at 449–474 (RSTSQGSINSPVYSRHSYTPTTSRSP) shows a compositional bias: polar residues. Phosphoserine is present on residues Ser-452, Ser-455, Ser-458, Ser-498, and Ser-587. Residues 590–614 (EEDDEELLRRRQLQEEQLMKLNSGL) adopt a coiled-coil conformation. A Glycyl lysine isopeptide (Lys-Gly) (interchain with G-Cter in SUMO2) cross-link involves residue Lys-620. Ser-640, Ser-655, Ser-677, and Ser-706 each carry phosphoserine. The 69-residue stretch at 710–778 (MLEPKIFPYE…NDMKKKAKLF (69 aa)) folds into the HP domain.

As to quaternary structure, binds F-actin. Interacts with ABRA. In terms of tissue distribution, detected in liver, heart, skeletal muscle, brain and retina, where it is concentrated in the inner segment and in the outer plexiform layers.

The protein resides in the cytoplasm. The protein localises to the cytoskeleton. Functionally, may act as scaffold protein. May play a role in the development of the retina. Has been suggested to play a role in axon guidance. This chain is Actin-binding LIM protein 1 (ABLIM1), found in Homo sapiens (Human).